Here is a 173-residue protein sequence, read N- to C-terminus: Development-specific protein S (173 aa).

Beta/gamma crystallin 'Greek key' domains follow at residues 2-46 (ANIT…KVPP) and 48-86 (VKAI…RVIS). Residues Tyr-8, Asn-37, Thr-38, Ser-40, Gln-54, Asn-77, Asn-78, and Ser-80 each coordinate Ca(2+). Residues 87 to 90 (VPVQ) are connecting peptide. Beta/gamma crystallin 'Greek key' domains are found at residues 91 to 135 (PRAR…KPQG) and 136 to 173 (LAVV…IRIS).

Belongs to the beta/gamma-crystallin family.

Its function is as follows. Protein S, induced in large amounts during fruiting body formation, assembles on the surface of myxospores in the presence of calcium ions. The chain is Development-specific protein S (tps) from Myxococcus xanthus.